A 229-amino-acid polypeptide reads, in one-letter code: Protein TraJ (229 aa).

It localises to the cytoplasm. In terms of biological role, this protein is essential for positively regulating the expression of transfer genes that are involved in the conjugal transfer of DNA between bacterial cells. The polypeptide is Protein TraJ (traJ) (Escherichia coli (strain K12)).